Consider the following 208-residue polypeptide: Uracil phosphoribosyltransferase (208 aa).

Residues Arg78, Arg103, and 130-138 (DPMLATGGS) contribute to the 5-phospho-alpha-D-ribose 1-diphosphate site. Uracil is bound by residues Ile193 and 198–200 (GDA). Asp199 serves as a coordination point for 5-phospho-alpha-D-ribose 1-diphosphate.

It belongs to the UPRTase family. Mg(2+) is required as a cofactor.

The enzyme catalyses UMP + diphosphate = 5-phospho-alpha-D-ribose 1-diphosphate + uracil. It participates in pyrimidine metabolism; UMP biosynthesis via salvage pathway; UMP from uracil: step 1/1. Allosterically activated by GTP. In terms of biological role, catalyzes the conversion of uracil and 5-phospho-alpha-D-ribose 1-diphosphate (PRPP) to UMP and diphosphate. This is Uracil phosphoribosyltransferase from Shewanella baltica (strain OS223).